Here is a 301-residue protein sequence, read N- to C-terminus: Rhodopsin (301 aa).

Topologically, residues Leu-1–Met-18 are extracellular. Residues Tyr-19–Val-43 form a helical membrane-spanning segment. At Phe-44–Asn-55 the chain is on the cytoplasmic side. Residues Leu-56 to Val-78 form a helical membrane-spanning segment. Topologically, residues Thr-79 to Cys-92 are extracellular. The cysteines at positions 92 and 169 are disulfide-linked. The chain crosses the membrane as a helical span at residues Gln-93–Phe-115. The short motif at Asp-116–Tyr-118 is the 'Ionic lock' involved in activated form stabilization element. Topologically, residues Asp-116–Lys-134 are cytoplasmic. The helical transmembrane segment at Ala-135 to Phe-155 threads the bilayer. The Extracellular segment spans residues Gly-156–Ser-182. The N-linked (GlcNAc...) asparagine glycan is linked to Asn-165. A helical membrane pass occupies residues Tyr-183 to Val-204. Over Phe-205 to Lys-245 the chain is Cytoplasmic. A helical membrane pass occupies residues Asn-246–Val-267. Over Gly-268–Val-278 the chain is Extracellular. Residues Tyr-279–Ile-300 form a helical membrane-spanning segment. An N6-(retinylidene)lysine modification is found at Lys-288.

Belongs to the G-protein coupled receptor 1 family. Opsin subfamily. Homodimer. Interacts with GNAQ. Post-translationally, contains one covalently linked retinal chromophore.

The protein localises to the cell projection. It is found in the rhabdomere membrane. Its function is as follows. Photoreceptor required for image-forming vision at low light intensity. Can use both retinal and 3-dehydroretinal as visual pigment. Light-induced isomerization of 11-cis to all-trans retinal triggers a conformational change that activates signaling via G-proteins. Signaling via GNAQ probably mediates the activation of phospholipase C. The chain is Rhodopsin (RHO) from Cambarus hubrichti (Salem cave crayfish).